The chain runs to 256 residues: Pyridoxine 5'-phosphate synthase (256 aa).

Residue Asn-10 participates in 3-amino-2-oxopropyl phosphate binding. 12 to 13 (DH) is a binding site for 1-deoxy-D-xylulose 5-phosphate. 3-amino-2-oxopropyl phosphate is bound at residue Arg-21. His-46 functions as the Proton acceptor in the catalytic mechanism. Residues Arg-48 and His-53 each coordinate 1-deoxy-D-xylulose 5-phosphate. Glu-73 (proton acceptor) is an active-site residue. Thr-103 is a binding site for 1-deoxy-D-xylulose 5-phosphate. His-193 serves as the catalytic Proton donor. 3-amino-2-oxopropyl phosphate-binding positions include Gly-194 and 215–216 (GH).

This sequence belongs to the PNP synthase family. Homooctamer; tetramer of dimers.

The protein resides in the cytoplasm. It carries out the reaction 3-amino-2-oxopropyl phosphate + 1-deoxy-D-xylulose 5-phosphate = pyridoxine 5'-phosphate + phosphate + 2 H2O + H(+). It functions in the pathway cofactor biosynthesis; pyridoxine 5'-phosphate biosynthesis; pyridoxine 5'-phosphate from D-erythrose 4-phosphate: step 5/5. In terms of biological role, catalyzes the complicated ring closure reaction between the two acyclic compounds 1-deoxy-D-xylulose-5-phosphate (DXP) and 3-amino-2-oxopropyl phosphate (1-amino-acetone-3-phosphate or AAP) to form pyridoxine 5'-phosphate (PNP) and inorganic phosphate. The sequence is that of Pyridoxine 5'-phosphate synthase from Zymomonas mobilis subsp. mobilis (strain ATCC 31821 / ZM4 / CP4).